We begin with the raw amino-acid sequence, 499 residues long: Probable cytosol aminopeptidase (499 aa).

Mn(2+) contacts are provided by lysine 263 and aspartate 268. Lysine 275 is an active-site residue. Mn(2+)-binding residues include aspartate 286, aspartate 345, and glutamate 347. Arginine 349 is a catalytic residue.

This sequence belongs to the peptidase M17 family. Mn(2+) is required as a cofactor.

The protein resides in the cytoplasm. The enzyme catalyses Release of an N-terminal amino acid, Xaa-|-Yaa-, in which Xaa is preferably Leu, but may be other amino acids including Pro although not Arg or Lys, and Yaa may be Pro. Amino acid amides and methyl esters are also readily hydrolyzed, but rates on arylamides are exceedingly low.. It catalyses the reaction Release of an N-terminal amino acid, preferentially leucine, but not glutamic or aspartic acids.. In terms of biological role, presumably involved in the processing and regular turnover of intracellular proteins. Catalyzes the removal of unsubstituted N-terminal amino acids from various peptides. The protein is Probable cytosol aminopeptidase (pepA) of Chlamydia trachomatis serovar D (strain ATCC VR-885 / DSM 19411 / UW-3/Cx).